The following is a 169-amino-acid chain: MVNRILDLLIQYKAVEFGDFTLASGAQSKYYIDVKTAIMQPELLSEIAAEVAKKYDFECIAGVAVGGVPLAVAVSLAANKPCAVIRAAAKDHGKSQMIIGNVKGQRVLLIEDVTTSGGSSKYGVEELRKAGALIDSVVTVVDREGGAEELLAAEGITLHPLVKASELLA.

Residues Arg86, Lys90, His92, and 111–119 each bind 5-phospho-alpha-D-ribose 1-diphosphate; that span reads EDVTTSGGS. Residues Thr115 and Arg143 each coordinate orotate.

Belongs to the purine/pyrimidine phosphoribosyltransferase family. PyrE subfamily. As to quaternary structure, homodimer. Mg(2+) is required as a cofactor.

It catalyses the reaction orotidine 5'-phosphate + diphosphate = orotate + 5-phospho-alpha-D-ribose 1-diphosphate. Its pathway is pyrimidine metabolism; UMP biosynthesis via de novo pathway; UMP from orotate: step 1/2. Functionally, catalyzes the transfer of a ribosyl phosphate group from 5-phosphoribose 1-diphosphate to orotate, leading to the formation of orotidine monophosphate (OMP). This Methanocorpusculum labreanum (strain ATCC 43576 / DSM 4855 / Z) protein is Orotate phosphoribosyltransferase.